Reading from the N-terminus, the 89-residue chain is MAAQIPESDQIKQFKEFLGTYNKLTETCFLDCVKDFTTREVKPEEVTCSEHCLQKYLKMTQRISVRFQEYHIQQNEALAAKAGLLGQPR.

Ala-2 is modified (N-acetylalanine). The Twin CX3C motif motif lies at 28–52; it reads CFLDCVKDFTTREVKPEEVTCSEHC. 2 disulfides stabilise this stretch: Cys-28-Cys-52 and Cys-32-Cys-48.

It belongs to the small Tim family. In terms of assembly, heterohexamer; composed of 3 copies of TIMM9 and 3 copies of TIMM10/TIM10A, named soluble 70 kDa complex. The complex forms a 6-bladed alpha-propeller structure and associates with the TIMM22 component of the TIM22 complex. Interacts with multi-pass transmembrane proteins in transit. Also forms a complex composed of TIMM9, TIMM10/TIM10A and FXC1/TIM10B.

The protein localises to the mitochondrion inner membrane. Functionally, mitochondrial intermembrane chaperone that participates in the import and insertion of multi-pass transmembrane proteins into the mitochondrial inner membrane. May also be required for the transfer of beta-barrel precursors from the TOM complex to the sorting and assembly machinery (SAM complex) of the outer membrane. Acts as a chaperone-like protein that protects the hydrophobic precursors from aggregation and guide them through the mitochondrial intermembrane space. The protein is Mitochondrial import inner membrane translocase subunit Tim9 (Timm9) of Mus musculus (Mouse).